Here is a 136-residue protein sequence, read N- to C-terminus: Large ribosomal subunit protein uL22 (136 aa).

It belongs to the universal ribosomal protein uL22 family. As to quaternary structure, part of the 50S ribosomal subunit.

This protein binds specifically to 23S rRNA; its binding is stimulated by other ribosomal proteins, e.g. L4, L17, and L20. It is important during the early stages of 50S assembly. It makes multiple contacts with different domains of the 23S rRNA in the assembled 50S subunit and ribosome. Functionally, the globular domain of the protein is located near the polypeptide exit tunnel on the outside of the subunit, while an extended beta-hairpin is found that lines the wall of the exit tunnel in the center of the 70S ribosome. The chain is Large ribosomal subunit protein uL22 from Bacteroides fragilis (strain YCH46).